Here is a 1910-residue protein sequence, read N- to C-terminus: C2 domain-containing protein (1910 aa).

Over residues 1-28 (MMKLKEMVEAAEAKVESKPPQAAEEKAP) the composition is skewed to basic and acidic residues. Disordered regions lie at residues 1–54 (MMKL…EPLD), 355–377 (AMKL…PEDG), and 398–428 (LEEL…DGPQ). The segment covering 414–423 (KGEDKKDGNK) has biased composition (basic and acidic residues). A C2 domain is found at 557-678 (QLGEVSESDS…FFNEKHNKRN (122 aa)). Composition is skewed to basic and acidic residues over residues 1192–1205 (LAQK…DAQR) and 1215–1228 (GHEG…DKQG). Disordered stretches follow at residues 1192 to 1267 (LAQK…VKKG), 1405 to 1424 (ATAG…RDMQ), 1431 to 1654 (LEEA…SMGA), 1666 to 1747 (QRKH…FLSS), 1822 to 1841 (AKEE…DWSD), and 1879 to 1910 (DACS…AGRT). Composition is skewed to low complexity over residues 1239–1257 (AAAA…VQGA) and 1405–1414 (ATAGEGEQQT). The span at 1440 to 1469 (KKKKKKEKKEKKEKKEKKEKKEKKEKKKKK) shows a compositional bias: basic residues. Residues 1492-1502 (PAAAIPSVLLP) show a composition bias toward low complexity. Residues 1517–1526 (KKEKKEKKKK) are compositionally biased toward basic residues. Over residues 1550 to 1561 (PAAAIPSILLPA) the composition is skewed to low complexity. Basic and acidic residues predominate over residues 1569-1584 (EKPKEKKTEKKKEKHT). A compositionally biased stretch (polar residues) spans 1595 to 1604 (LPESETTAVV). 2 stretches are compositionally biased toward low complexity: residues 1620–1629 (VPSSIASSEA) and 1675–1698 (SSSS…SSSS). The span at 1701-1711 (AETRAKADALR) shows a compositional bias: basic and acidic residues. 2 stretches are compositionally biased toward low complexity: residues 1712-1722 (ARLQAAQARLA) and 1729-1747 (VSSS…FLSS). Residues 1766-1828 (QQRLQKMVSG…TRRAKEEKDL (63 aa)) adopt a coiled-coil conformation. Residues 1890-1904 (ESRTTAGAKLRQQQL) show a composition bias toward polar residues.

Its subcellular location is the membrane. Functionally, regulates microneme secretion. Probably involved in regulation of rhoptry and dense granule secretion. The polypeptide is C2 domain-containing protein (Toxoplasma gondii).